Reading from the N-terminus, the 231-residue chain is Large ribosomal subunit protein uL1 (231 aa).

Belongs to the universal ribosomal protein uL1 family. Part of the 50S ribosomal subunit.

Functionally, binds directly to 23S rRNA. The L1 stalk is quite mobile in the ribosome, and is involved in E site tRNA release. In terms of biological role, protein L1 is also a translational repressor protein, it controls the translation of the L11 operon by binding to its mRNA. The chain is Large ribosomal subunit protein uL1 from Acinetobacter baylyi (strain ATCC 33305 / BD413 / ADP1).